The primary structure comprises 609 residues: Actin-interacting protein 1-2 (609 aa).

WD repeat units follow at residues 2-42 (ELSE…VTLD), 54-93 (EHAY…VLKN), 97-141 (VLAG…GEFD), 142-182 (GHSR…FKLS), 185-224 (EHSN…ILGE), 230-269 (GHKG…SGSL), 277-318 (GSSG…KSPF), 322-362 (GHMK…CGKL), 445-484 (NLGF…LTEE), 489-528 (RHRG…MKLK), 532-571 (YHSA…SSRM), and 576-609 (AHLG…FTPQ).

In terms of tissue distribution, expressed in leaves, stems, flower buds and flowers.

In terms of biological role, binds actin. Enhances the F-actin depolymerization activity of actin-depolymerizing factor (ADF) proteins. The protein is Actin-interacting protein 1-2 of Arabidopsis thaliana (Mouse-ear cress).